Reading from the N-terminus, the 588-residue chain is Sentrin-specific protease 2 (588 aa).

A Nuclear localization signal motif is present at residues 28-31 (KRRR). The residue at position 32 (serine 32) is a Phosphoserine. The short motif at 47 to 52 (PAKRPR) is the Nuclear localization signal element. The segment at 157 to 184 (EGYNRRPSGRRHSKSNPESSLTWKPQEQ) is disordered. Over residues 172–184 (NPESSLTWKPQEQ) the composition is skewed to polar residues. The Nuclear export signal motif lies at 316 to 331 (MEPDLSEEVSARLRLG). Phosphoserine occurs at positions 332 and 343. Residues 394–558 (LRITRGDIQT…MFTCKYADYI (165 aa)) are protease. Catalysis depends on residues histidine 477 and aspartate 494. The active-site Nucleophile is the cysteine 547.

The protein belongs to the peptidase C48 family. As to quaternary structure, binds to SUMO2 and SUMO3. Interacts with the C-terminal domain of NUP153 via its N-terminus. Interacts with MTA1. Polyubiquitinated; which leads to proteasomal degradation. In terms of tissue distribution, highly expressed in testis. Detected in brain, heart and thymus.

It localises to the nucleus. The protein resides in the nuclear pore complex. Its subcellular location is the nucleus membrane. It is found in the cytoplasm. The protein localises to the cytoplasmic vesicle. It localises to the PML body. In terms of biological role, protease that catalyzes two essential functions in the SUMO pathway. The first is the hydrolysis of an alpha-linked peptide bond at the C-terminal end of the small ubiquitin-like modifier (SUMO) propeptides, SUMO1, SUMO2 and SUMO3 leading to the mature form of the proteins. The second is the deconjugation of SUMO1, SUMO2 and SUMO3 from targeted proteins, by cleaving an epsilon-linked peptide bond between the C-terminal glycine of the mature SUMO and the lysine epsilon-amino group of the target protein. May down-regulate CTNNB1 levels and thereby modulate the Wnt pathway. Deconjugates SUMO2 from MTA1. Plays a dynamic role in adipogenesis by desumoylating and promoting the stabilization of CEBPB. Acts as a regulator of the cGAS-STING pathway by catalyzing desumoylation of CGAS and STING1 during the late phase of viral infection. Activates transcription. The protein is Sentrin-specific protease 2 (Senp2) of Mus musculus (Mouse).